The primary structure comprises 304 residues: Type II restriction enzyme LlaDCHI (304 aa).

The protein belongs to the DpnII type II restriction endonuclease family.

The enzyme catalyses Endonucleolytic cleavage of DNA to give specific double-stranded fragments with terminal 5'-phosphates.. A P subtype restriction enzyme that recognizes the double-stranded unmethylated sequence 5'-GATC-3' and cleaves before G-1. This chain is Type II restriction enzyme LlaDCHI (llaDCHIR), found in Lactococcus lactis subsp. cremoris (Streptococcus cremoris).